The sequence spans 132 residues: Small ribosomal subunit protein uS8 (132 aa).

This sequence belongs to the universal ribosomal protein uS8 family. In terms of assembly, part of the 30S ribosomal subunit. Contacts proteins S5 and S12.

Functionally, one of the primary rRNA binding proteins, it binds directly to 16S rRNA central domain where it helps coordinate assembly of the platform of the 30S subunit. This is Small ribosomal subunit protein uS8 from Oceanobacillus iheyensis (strain DSM 14371 / CIP 107618 / JCM 11309 / KCTC 3954 / HTE831).